The primary structure comprises 107 residues: Prostate collagen triple helix protein (107 aa).

The interval 47–107 (PLIPRTPGSP…PTSPLFPFCP (61 aa)) is disordered. Low complexity predominate over residues 81-100 (VGPKGPMLPLGPSGPVGPTS).

In terms of tissue distribution, expressed in prostate and testis. Weakly or not expressed in other tissues. Overexpressed in prostate cancers.

It is found in the cytoplasm. May be involved in growth and survival of prostate cancer cells through the TAF-Ibeta pathway. The protein is Prostate collagen triple helix protein (PCOTH) of Homo sapiens (Human).